The primary structure comprises 436 residues: 3-ketoacyl-CoA thiolase (436 aa).

The active-site Acyl-thioester intermediate is Cys-99. Active-site proton acceptor residues include His-392 and Cys-422.

Belongs to the thiolase-like superfamily. Thiolase family. In terms of assembly, heterotetramer of two alpha chains (FadJ) and two beta chains (FadI).

The protein localises to the cytoplasm. The enzyme catalyses an acyl-CoA + acetyl-CoA = a 3-oxoacyl-CoA + CoA. The protein operates within lipid metabolism; fatty acid beta-oxidation. Functionally, catalyzes the final step of fatty acid oxidation in which acetyl-CoA is released and the CoA ester of a fatty acid two carbons shorter is formed. The sequence is that of 3-ketoacyl-CoA thiolase from Pseudoalteromonas translucida (strain TAC 125).